Consider the following 377-residue polypeptide: Peroxisomal membrane protein PEX14 (377 aa).

Residues 1 to 20 (MASSEQAEQPSQPSSSPGSE) show a composition bias toward low complexity. Residues 1 to 23 (MASSEQAEQPSQPSSSPGSENVV) are disordered. Residue A2 is modified to N-acetylalanine. The Peroxisomal portion of the chain corresponds to 2 to 108 (ASSEQAEQPS…CSPGSSRWRD (107 aa)). K34 carries the N6-acetyllysine modification. A helical membrane pass occupies residues 109 to 126 (YGALAIIMAGIAFGFHQL). The Cytoplasmic portion of the chain corresponds to 127–377 (YKKYLLPLIL…EGASNESERH (251 aa)). A disordered region spans residues 230 to 377 (PPSPSAPKIP…EGASNESERH (148 aa)). The residue at position 232 (S232) is a Phosphoserine. Composition is skewed to low complexity over residues 244–259 (PVKS…VNHH) and 265–275 (SPVSNESTSSS). A phosphoserine mark is found at S282 and S335. The span at 323 to 342 (KEEEEEEEEEDVSHVDEEDV) shows a compositional bias: acidic residues. The segment covering 360 to 377 (QVDKLRRPEGASNESERH) has biased composition (basic and acidic residues).

Belongs to the peroxin-14 family. In terms of assembly, interacts with PEX13; forming the PEX13-PEX14 docking complex. Interacts with PEX5 (via WxxxF/Y motifs). Interacts with PEX19. Interacts with tubulin.

The protein localises to the peroxisome membrane. Component of the PEX13-PEX14 docking complex, a translocon channel that specifically mediates the import of peroxisomal cargo proteins bound to PEX5 receptor. The PEX13-PEX14 docking complex forms a large import pore which can be opened to a diameter of about 9 nm. Mechanistically, PEX5 receptor along with cargo proteins associates with the PEX14 subunit of the PEX13-PEX14 docking complex in the cytosol, leading to the insertion of the receptor into the organelle membrane with the concomitant translocation of the cargo into the peroxisome matrix. Plays a key role for peroxisome movement through a direct interaction with tubulin. This chain is Peroxisomal membrane protein PEX14, found in Cricetulus longicaudatus (Long-tailed dwarf hamster).